The primary structure comprises 294 residues: S-methyl-5'-thioadenosine phosphorylase (294 aa).

Phosphate is bound by residues Ser-16, 58-59 (RH), and 91-92 (SA). Residue Met-189 coordinates substrate. Thr-190 contributes to the phosphate binding site. 213–215 (DFD) is a substrate binding site.

It belongs to the PNP/MTAP phosphorylase family. MTAP subfamily. In terms of assembly, homohexamer. Dimer of a homotrimer.

The enzyme catalyses S-methyl-5'-thioadenosine + phosphate = 5-(methylsulfanyl)-alpha-D-ribose 1-phosphate + adenine. It catalyses the reaction 5'-deoxyadenosine + phosphate = 5-deoxy-alpha-D-ribose 1-phosphate + adenine. It participates in amino-acid biosynthesis; L-methionine biosynthesis via salvage pathway; S-methyl-5-thio-alpha-D-ribose 1-phosphate from S-methyl-5'-thioadenosine (phosphorylase route): step 1/1. Catalyzes the reversible phosphorylation of S-methyl-5'-thioadenosine (MTA) to adenine and 5-methylthioribose-1-phosphate. Involved in the breakdown of MTA, a major by-product of polyamine biosynthesis. Responsible for the first step in the methionine salvage pathway after MTA has been generated from S-adenosylmethionine. Has broad substrate specificity with 6-aminopurine nucleosides as preferred substrates. Also catalyzes the phosphorylation of 5'-deoxyadenosine (5'dAdo) to 5-deoxyribose 1-phosphate. Part of a bifunctional DHAP-shunt salvage pathway for SAM by-products. The chain is S-methyl-5'-thioadenosine phosphorylase from Rhodospirillum rubrum (strain ATCC 11170 / ATH 1.1.1 / DSM 467 / LMG 4362 / NCIMB 8255 / S1).